The primary structure comprises 164 residues: Ribosomal RNA large subunit methyltransferase H (164 aa).

Gly-109 contributes to the S-adenosyl-L-methionine binding site.

It belongs to the RNA methyltransferase RlmH family. Homodimer.

The protein localises to the cytoplasm. It catalyses the reaction pseudouridine(1915) in 23S rRNA + S-adenosyl-L-methionine = N(3)-methylpseudouridine(1915) in 23S rRNA + S-adenosyl-L-homocysteine + H(+). Functionally, specifically methylates the pseudouridine at position 1915 (m3Psi1915) in 23S rRNA. The sequence is that of Ribosomal RNA large subunit methyltransferase H from Methylobacterium radiotolerans (strain ATCC 27329 / DSM 1819 / JCM 2831 / NBRC 15690 / NCIMB 10815 / 0-1).